Here is a 415-residue protein sequence, read N- to C-terminus: Peptide chain release factor subunit 1 (415 aa).

This sequence belongs to the eukaryotic release factor 1 family. Heterodimer of two subunits, one of which binds GTP.

It localises to the cytoplasm. Functionally, directs the termination of nascent peptide synthesis (translation) in response to the termination codons UAA, UAG and UGA. The protein is Peptide chain release factor subunit 1 of Thermococcus onnurineus (strain NA1).